A 304-amino-acid chain; its full sequence is tRNA pseudouridine synthase B (304 aa).

The active-site Nucleophile is the Asp38.

It belongs to the pseudouridine synthase TruB family. Type 1 subfamily.

It catalyses the reaction uridine(55) in tRNA = pseudouridine(55) in tRNA. Its function is as follows. Responsible for synthesis of pseudouridine from uracil-55 in the psi GC loop of transfer RNAs. The polypeptide is tRNA pseudouridine synthase B (Listeria innocua serovar 6a (strain ATCC BAA-680 / CLIP 11262)).